Consider the following 617-residue polypeptide: Formin-binding protein 1 (617 aa).

Residues 1 to 79 form a required for self-association and induction of membrane tubulation region; sequence MSWGTELWDQ…CKAFISNLNE (79 aa). Residues 1 to 264 enclose the F-BAR domain; that stretch reads MSWGTELWDQ…AAESIDQKND (264 aa). Residues 1–335 form an interaction with microtubules region; sequence MSWGTELWDQ…KKNKLMSLLT (335 aa). Residues lysine 66 and lysine 110 each carry the N6-acetyllysine modification. The stretch at 67–259 forms a coiled coil; the sequence is YTSCKAFISN…DGIVKAAESI (193 aa). Residues 251 to 617 form a required for self-association and induction of membrane tubulation region; the sequence is GIVKAAESID…VCLDKNAKDS (367 aa). 2 disordered regions span residues 280–315 and 333–366; these read GDIE…KFGG and LLTS…QKEP. A phosphoserine mark is found at serine 296 and serine 299. Pro residues predominate over residues 338–347; that stretch reads HQPPPPPPAS. Residues serine 349 and serine 359 each carry the phosphoserine modification. Residues 398-490 adopt a coiled-coil conformation; the sequence is TPEDFSNLPP…EVEGRLPARS (93 aa). Positions 400–552 are interaction with RND2; sequence EDFSNLPPEQ…FDDEEPLPAI (153 aa). The REM-1 domain occupies 404–481; sequence NLPPEQRRKK…TQKFEAWLAE (78 aa). Residues 486–531 are disordered; the sequence is LPARSEQARRQSGLYDSQNPPTVNNCAQDRESPDGSYTEEQSQESE. The segment at 495–617 is interaction with PDE6G; that stretch reads RQSGLYDSQN…VCLDKNAKDS (123 aa). Serine 497 is modified (phosphoserine). A compositionally biased stretch (polar residues) spans 499 to 512; the sequence is LYDSQNPPTVNNCA. The residue at position 500 (tyrosine 500) is a Phosphotyrosine. The interval 514–617 is required for interaction with TNKS; it reads DRESPDGSYT…VCLDKNAKDS (104 aa). Serine 521 carries the post-translational modification Phosphoserine. An interaction with DNM1 and DNM3 region spans residues 535–617; that stretch reads LATDFDDEFD…VCLDKNAKDS (83 aa). Residues 550-611 enclose the SH3 domain; sequence PAIGTCKALY…PTSYVEVCLD (62 aa). The segment at 550–617 is interaction with ARHGAP17, DAAM1, DIAPH1 and DIAPH2; the sequence is PAIGTCKALY…VCLDKNAKDS (68 aa). The tract at residues 553–609 is interaction with DNM2 and WASL; sequence GTCKALYTFEGQNEGTISVVEGETLYVIEEDKGDGWTRIRRNEDEEGYVPTSYVEVC. The interaction with FASLG stretch occupies residues 553-610; that stretch reads GTCKALYTFEGQNEGTISVVEGETLYVIEEDKGDGWTRIRRNEDEEGYVPTSYVEVCL.

This sequence belongs to the FNBP1 family. In terms of assembly, interacts specifically with GTP-bound RND2 and CDC42. Interacts with PDE6G and microtubules. Homodimerizes, the dimers can polymerize end-to-end to form filamentous structures. Interacts with AKAP9, ARHGAP17, DAAM1, DIAPH1, DIAPH2, DNM1, DNM2, DNM3, FASLG/FASL, SNX2 and WASL/N-WASP. May interact with TNKS. Very highly expressed in the epithelial cells of the gastrointestinal tract, respiratory, reproductive and urinary systems. Also highly expressed in brown adipose tissue, cardiomyocytes, enteric ganglia and glucagon producing cells of the pancreas. Expressed in germ cells of the testis and all regions of the brain.

Its subcellular location is the cytoplasm. It is found in the cytoskeleton. The protein localises to the cell cortex. It localises to the lysosome. The protein resides in the cytoplasmic vesicle. Its subcellular location is the cell membrane. It is found in the membrane. The protein localises to the clathrin-coated pit. May act as a link between RND2 signaling and regulation of the actin cytoskeleton. Required to coordinate membrane tubulation with reorganization of the actin cytoskeleton during the late stage of clathrin-mediated endocytosis. Binds to lipids such as phosphatidylinositol 4,5-bisphosphate and phosphatidylserine and promotes membrane invagination and the formation of tubules. Also enhances actin polymerization via the recruitment of WASL/N-WASP, which in turn activates the Arp2/3 complex. Actin polymerization may promote the fission of membrane tubules to form endocytic vesicles. May be required for the lysosomal retention of FASLG/FASL. In Homo sapiens (Human), this protein is Formin-binding protein 1 (FNBP1).